The chain runs to 504 residues: Bifunctional purine biosynthesis protein PurH (504 aa).

Positions 1-144 (MRKRALISVY…KSFKNVVVIS (144 aa)) constitute an MGS-like domain.

The protein belongs to the PurH family.

The enzyme catalyses (6R)-10-formyltetrahydrofolate + 5-amino-1-(5-phospho-beta-D-ribosyl)imidazole-4-carboxamide = 5-formamido-1-(5-phospho-D-ribosyl)imidazole-4-carboxamide + (6S)-5,6,7,8-tetrahydrofolate. The catalysed reaction is IMP + H2O = 5-formamido-1-(5-phospho-D-ribosyl)imidazole-4-carboxamide. It functions in the pathway purine metabolism; IMP biosynthesis via de novo pathway; 5-formamido-1-(5-phospho-D-ribosyl)imidazole-4-carboxamide from 5-amino-1-(5-phospho-D-ribosyl)imidazole-4-carboxamide (10-formyl THF route): step 1/1. Its pathway is purine metabolism; IMP biosynthesis via de novo pathway; IMP from 5-formamido-1-(5-phospho-D-ribosyl)imidazole-4-carboxamide: step 1/1. This chain is Bifunctional purine biosynthesis protein PurH, found in Fusobacterium nucleatum subsp. nucleatum (strain ATCC 25586 / DSM 15643 / BCRC 10681 / CIP 101130 / JCM 8532 / KCTC 2640 / LMG 13131 / VPI 4355).